We begin with the raw amino-acid sequence, 316 residues long: MHSSGGFQKAIHGHALLLLLLLASGAETFRICAFNAQRLTLAKVAREPVLDTLVKILARCDIMVLQEVVDSSDTAIPLLLRELNRFGDSGPYASHSSLLLGRSTYKEKYVYLYRSHEAEVRDSYMYDDQDDLFTREPFVCWFSLRSKVLPSLVLVPLHTTPKAVETELNALYDVFLDASGRWQTKDVILLGDFNADCTSLTKKRLDDLVLRTQAGFHWAIADGVDTTVRASTHCTYDRIVLHGELLQSLLRGAAAFDFPQSFGLTEQEALNISDHYPVEVDLALSWAVHGVQPPCLATLWLSLLLPLLAPQLGLVA.

A signal peptide spans M1 to T28. Active-site residues include E107 and H158. C197 and C234 form a disulfide bridge. N271 carries N-linked (GlcNAc...) asparagine glycosylation.

The protein belongs to the DNase I family.

It is found in the endoplasmic reticulum. This chain is Deoxyribonuclease-1-like 1 (DNASE1L1), found in Bos taurus (Bovine).